The sequence spans 129 residues: Fluoride-specific ion channel FluC 2 (129 aa).

4 helical membrane-spanning segments follow: residues 9–29 (LGTLISVFFFGMIGGTLRYLL), 37–57 (GTILVNLIGSFCLAFLTYYVI), 74–94 (MVGAFTTFSTFTVDILGLSTF), and 100–120 (YLLISVVGGFLLAYTGMILGI). Na(+) is bound by residues glycine 76 and threonine 79.

The protein belongs to the fluoride channel Fluc/FEX (TC 1.A.43) family.

It is found in the cell membrane. It carries out the reaction fluoride(in) = fluoride(out). Na(+) is not transported, but it plays an essential structural role and its presence is essential for fluoride channel function. Fluoride-specific ion channel. Important for reducing fluoride concentration in the cell, thus reducing its toxicity. In Ligilactobacillus salivarius (strain UCC118) (Lactobacillus salivarius), this protein is Fluoride-specific ion channel FluC 2.